A 180-amino-acid chain; its full sequence is Cuticle protein 3 (180 aa).

The signal sequence occupies residues 1 to 16 (MMKLIVLAAFIGVCAG). A Chitin-binding type R&amp;R domain is found at 58–121 (EQGFRYAYET…PQGAHFPTPP (64 aa)).

The chain is Cuticle protein 3 from Lonomia obliqua (Moth).